Consider the following 294-residue polypeptide: Proteasome subunit beta (294 aa).

Positions 1–65 are cleaved as a propeptide — removed in mature form; by autocatalysis; sequence MTADRPALRT…MESGDLAPHG (65 aa). The Nucleophile role is filled by T66.

Belongs to the peptidase T1B family. As to quaternary structure, the 20S proteasome core is composed of 14 alpha and 14 beta subunits that assemble into four stacked heptameric rings, resulting in a barrel-shaped structure. The two inner rings, each composed of seven catalytic beta subunits, are sandwiched by two outer rings, each composed of seven alpha subunits. The catalytic chamber with the active sites is on the inside of the barrel. Has a gated structure, the ends of the cylinder being occluded by the N-termini of the alpha-subunits. Is capped by the proteasome-associated ATPase, ARC.

The protein localises to the cytoplasm. It catalyses the reaction Cleavage of peptide bonds with very broad specificity.. It functions in the pathway protein degradation; proteasomal Pup-dependent pathway. With respect to regulation, the formation of the proteasomal ATPase ARC-20S proteasome complex, likely via the docking of the C-termini of ARC into the intersubunit pockets in the alpha-rings, may trigger opening of the gate for substrate entry. Interconversion between the open-gate and close-gate conformations leads to a dynamic regulation of the 20S proteasome proteolysis activity. Component of the proteasome core, a large protease complex with broad specificity involved in protein degradation. The protein is Proteasome subunit beta of Rhodococcus opacus (strain B4).